A 456-amino-acid polypeptide reads, in one-letter code: Bifunctional protein GlmU (456 aa).

The interval 1 to 228 is pyrophosphorylase; it reads MKLKAIILAA…YEDIMAVNSR (228 aa). Residues 8 to 11, Lys-22, Gln-72, 77 to 78, 99 to 101, Gly-138, Glu-153, Asn-168, and Asn-226 each bind UDP-N-acetyl-alpha-D-glucosamine; these read LAAG, GT, and YGD. Residue Asp-101 coordinates Mg(2+). Position 226 (Asn-226) interacts with Mg(2+). The linker stretch occupies residues 229–249; sequence EQLAEVEEVMQRRIVKKHMEA. Positions 250–456 are N-acetyltransferase; sequence GVTFIDPQST…WVARKGVGKK (207 aa). Residues Arg-331 and Lys-349 each coordinate UDP-N-acetyl-alpha-D-glucosamine. The Proton acceptor role is filled by His-361. Tyr-364 and Asn-375 together coordinate UDP-N-acetyl-alpha-D-glucosamine. Acetyl-CoA-binding positions include 384-385, Ser-403, Ser-421, and Arg-438; that span reads NY.

It in the N-terminal section; belongs to the N-acetylglucosamine-1-phosphate uridyltransferase family. The protein in the C-terminal section; belongs to the transferase hexapeptide repeat family. Homotrimer. Mg(2+) serves as cofactor.

It localises to the cytoplasm. The enzyme catalyses alpha-D-glucosamine 1-phosphate + acetyl-CoA = N-acetyl-alpha-D-glucosamine 1-phosphate + CoA + H(+). It catalyses the reaction N-acetyl-alpha-D-glucosamine 1-phosphate + UTP + H(+) = UDP-N-acetyl-alpha-D-glucosamine + diphosphate. The protein operates within nucleotide-sugar biosynthesis; UDP-N-acetyl-alpha-D-glucosamine biosynthesis; N-acetyl-alpha-D-glucosamine 1-phosphate from alpha-D-glucosamine 6-phosphate (route II): step 2/2. It participates in nucleotide-sugar biosynthesis; UDP-N-acetyl-alpha-D-glucosamine biosynthesis; UDP-N-acetyl-alpha-D-glucosamine from N-acetyl-alpha-D-glucosamine 1-phosphate: step 1/1. It functions in the pathway bacterial outer membrane biogenesis; LPS lipid A biosynthesis. In terms of biological role, catalyzes the last two sequential reactions in the de novo biosynthetic pathway for UDP-N-acetylglucosamine (UDP-GlcNAc). The C-terminal domain catalyzes the transfer of acetyl group from acetyl coenzyme A to glucosamine-1-phosphate (GlcN-1-P) to produce N-acetylglucosamine-1-phosphate (GlcNAc-1-P), which is converted into UDP-GlcNAc by the transfer of uridine 5-monophosphate (from uridine 5-triphosphate), a reaction catalyzed by the N-terminal domain. The chain is Bifunctional protein GlmU from Alkaliphilus metalliredigens (strain QYMF).